The sequence spans 102 residues: MAGQKIRIRLKSYDHEVIDQSAKKIVETVTNAGATVVGPVPLPTEKNVLVVIRSPHKYKDSREHFEMRTHKRLIDIVDPTPKAVDSLMHIDLPADVNIEIKL.

Belongs to the universal ribosomal protein uS10 family. As to quaternary structure, part of the 30S ribosomal subunit.

Its function is as follows. Involved in the binding of tRNA to the ribosomes. This chain is Small ribosomal subunit protein uS10, found in Bifidobacterium adolescentis (strain ATCC 15703 / DSM 20083 / NCTC 11814 / E194a).